Here is a 151-residue protein sequence, read N- to C-terminus: Ribosome maturation factor RimP (151 aa).

This sequence belongs to the RimP family.

The protein resides in the cytoplasm. Required for maturation of 30S ribosomal subunits. The protein is Ribosome maturation factor RimP of Vibrio campbellii (strain ATCC BAA-1116).